We begin with the raw amino-acid sequence, 66 residues long: Toxin Boma6c (66 aa).

An LCN-type CS-alpha/beta domain is found at arginine 2–histidine 64. Intrachain disulfides connect cysteine 12–cysteine 63, cysteine 16–cysteine 36, cysteine 22–cysteine 46, and cysteine 26–cysteine 48.

The protein belongs to the long (4 C-C) scorpion toxin superfamily. Sodium channel inhibitor family. Alpha subfamily. As to expression, expressed by the venom gland.

It is found in the secreted. Functionally, alpha toxins bind voltage-independently at site-3 of sodium channels (Nav) and inhibit the inactivation of the activated channels, thereby blocking neuronal transmission. In Buthus occitanus mardochei (Moroccan scorpion), this protein is Toxin Boma6c.